Reading from the N-terminus, the 150-residue chain is 3-dehydroquinate dehydratase (150 aa).

The Proton acceptor role is filled by Tyr26. Substrate-binding residues include Asn77, His83, and Asp90. Residue His103 is the Proton donor of the active site. Substrate-binding positions include 104-105 (LS) and Arg114.

Belongs to the type-II 3-dehydroquinase family. In terms of assembly, homododecamer.

It carries out the reaction 3-dehydroquinate = 3-dehydroshikimate + H2O. It functions in the pathway metabolic intermediate biosynthesis; chorismate biosynthesis; chorismate from D-erythrose 4-phosphate and phosphoenolpyruvate: step 3/7. Its function is as follows. Catalyzes a trans-dehydration via an enolate intermediate. This Sodalis glossinidius (strain morsitans) protein is 3-dehydroquinate dehydratase.